A 111-amino-acid chain; its full sequence is Ribonuclease P protein component (111 aa).

The protein belongs to the RnpA family. As to quaternary structure, consists of a catalytic RNA component (M1 or rnpB) and a protein subunit.

The enzyme catalyses Endonucleolytic cleavage of RNA, removing 5'-extranucleotides from tRNA precursor.. Functionally, RNaseP catalyzes the removal of the 5'-leader sequence from pre-tRNA to produce the mature 5'-terminus. It can also cleave other RNA substrates such as 4.5S RNA. The protein component plays an auxiliary but essential role in vivo by binding to the 5'-leader sequence and broadening the substrate specificity of the ribozyme. This chain is Ribonuclease P protein component, found in Borrelia garinii subsp. bavariensis (strain ATCC BAA-2496 / DSM 23469 / PBi) (Borreliella bavariensis).